Consider the following 69-residue polypeptide: Toxin Tma2 (69 aa).

The LCN-type CS-alpha/beta domain maps to 2 to 66 (KDDYPVDTAE…SPTKTSKRCN (65 aa)). 4 disulfides stabilise this stretch: Cys-14–Cys-65, Cys-18–Cys-41, Cys-27–Cys-48, and Cys-31–Cys-50.

Belongs to the long (4 C-C) scorpion toxin superfamily. Sodium channel inhibitor family. As to expression, expressed by the venom gland.

Its subcellular location is the secreted. Inhibits voltage-gated sodium channels (Nav). This toxin shows insect lethality against crickets. The protein is Toxin Tma2 of Tityus macrochirus (Scorpion).